Consider the following 148-residue polypeptide: Snaclec alboaggregin-D subunit beta (148 aa).

An N-terminal signal peptide occupies residues 1–23 (MGRFISVSFGLLVVFLSLSGAGA). Residues Cys27 and Cys38 are joined by a disulfide bond. Positions 34–145 (YDLYCYKVFK…CNSTYSFVCK (112 aa)) constitute a C-type lectin domain. A glycan (N-linked (GlcNAc...) asparagine) is linked at Asn47. Disulfide bonds link Cys55–Cys144 and Cys121–Cys136. The N-linked (GlcNAc...) asparagine glycan is linked to Asn137.

As to quaternary structure, tetramer of heterodimers of alpha and beta subunits (alphabeta)(4); disulfide-linked. Expressed by the venom gland.

Its subcellular location is the secreted. Its function is as follows. Snaclec that induces human platelet aggregation in the absence of any cofactor with the EC(50) of 0.25 nM and causes tyrosine phosphorylation in human platelets. Antibodies against either platelet GPIbalpha (GP1BA) or GPVI (GP6) inhibit alboaggregin D-induced platelet aggregation. Only the combination of these two antibodies completely inhibit aggregation, suggesting that it acts through both GPIbalpha (GP1BA) and GPVI (GP6). This is Snaclec alboaggregin-D subunit beta from Trimeresurus albolabris (White-lipped pit viper).